We begin with the raw amino-acid sequence, 342 residues long: Cytochrome f (342 aa).

Residues 1-28 form the signal peptide; the sequence is MKKQWIAGAFGLTAALAGLVSVPQSALA. C48, C51, and H52 together coordinate heme. Residues 305–325 form a helical membrane-spanning segment; sequence VTWLVAFLAAAFICQLLLVLK.

Belongs to the cytochrome f family. As to quaternary structure, the 4 large subunits of the cytochrome b6-f complex are cytochrome b6, subunit IV (17 kDa polypeptide, PetD), cytochrome f and the Rieske protein, while the 4 small subunits are PetG, PetL, PetM and PetN. The complex functions as a dimer. Requires heme as cofactor.

The protein localises to the cell inner membrane. Its function is as follows. Component of the cytochrome b6-f complex, which mediates electron transfer between photosystem II (PSII) and photosystem I (PSI), cyclic electron flow around PSI, and state transitions. The polypeptide is Cytochrome f (petA) (Gloeobacter violaceus (strain ATCC 29082 / PCC 7421)).